Reading from the N-terminus, the 437-residue chain is Glucose-1-phosphate adenylyltransferase (437 aa).

Residues Tyr-113, Gly-179, 194–195 (EK), and Ser-212 each bind alpha-D-glucose 1-phosphate.

This sequence belongs to the bacterial/plant glucose-1-phosphate adenylyltransferase family. In terms of assembly, homotetramer.

It carries out the reaction alpha-D-glucose 1-phosphate + ATP + H(+) = ADP-alpha-D-glucose + diphosphate. The protein operates within glycan biosynthesis; glycogen biosynthesis. In terms of biological role, involved in the biosynthesis of ADP-glucose, a building block required for the elongation reactions to produce glycogen. Catalyzes the reaction between ATP and alpha-D-glucose 1-phosphate (G1P) to produce pyrophosphate and ADP-Glc. The chain is Glucose-1-phosphate adenylyltransferase from Haemophilus influenzae (strain ATCC 51907 / DSM 11121 / KW20 / Rd).